A 209-amino-acid chain; its full sequence is Ribosomal RNA large subunit methyltransferase E (209 aa).

S-adenosyl-L-methionine contacts are provided by Gly-63, Trp-65, Asp-83, Asp-99, and Asp-124. Lys-164 (proton acceptor) is an active-site residue.

Belongs to the class I-like SAM-binding methyltransferase superfamily. RNA methyltransferase RlmE family.

The protein localises to the cytoplasm. The enzyme catalyses uridine(2552) in 23S rRNA + S-adenosyl-L-methionine = 2'-O-methyluridine(2552) in 23S rRNA + S-adenosyl-L-homocysteine + H(+). Functionally, specifically methylates the uridine in position 2552 of 23S rRNA at the 2'-O position of the ribose in the fully assembled 50S ribosomal subunit. This chain is Ribosomal RNA large subunit methyltransferase E, found in Shewanella pealeana (strain ATCC 700345 / ANG-SQ1).